Consider the following 124-residue polypeptide: Glycine cleavage system H protein (124 aa).

The Lipoyl-binding domain maps to 22–104; the sequence is TATVGITDFA…YGDGWMIEIE (83 aa). Lysine 63 carries the post-translational modification N6-lipoyllysine.

The protein belongs to the GcvH family. The glycine cleavage system is composed of four proteins: P, T, L and H. (R)-lipoate is required as a cofactor.

In terms of biological role, the glycine cleavage system catalyzes the degradation of glycine. The H protein shuttles the methylamine group of glycine from the P protein to the T protein. The sequence is that of Glycine cleavage system H protein from Salinibacter ruber (strain DSM 13855 / M31).